The following is a 439-amino-acid chain: Cobyrinate a,c-diamide synthase (439 aa).

The GATase cobBQ-type domain occupies 238-431; that stretch reads KIAVAYDKAF…AHVNFLGNIE (194 aa). Cysteine 320 serves as the catalytic Nucleophile.

It belongs to the CobB/CbiA family. Mg(2+) serves as cofactor.

It catalyses the reaction cob(II)yrinate + 2 L-glutamine + 2 ATP + 2 H2O = cob(II)yrinate a,c diamide + 2 L-glutamate + 2 ADP + 2 phosphate + 2 H(+). The protein operates within cofactor biosynthesis; adenosylcobalamin biosynthesis; cob(II)yrinate a,c-diamide from sirohydrochlorin (anaerobic route): step 10/10. In terms of biological role, catalyzes the ATP-dependent amidation of the two carboxylate groups at positions a and c of cobyrinate, using either L-glutamine or ammonia as the nitrogen source. This chain is Cobyrinate a,c-diamide synthase, found in Clostridium tetani (strain Massachusetts / E88).